The following is a 49-amino-acid chain: Large ribosomal subunit protein bL36 (49 aa).

This sequence belongs to the bacterial ribosomal protein bL36 family.

The polypeptide is Large ribosomal subunit protein bL36 (Pseudomonas fluorescens (strain ATCC BAA-477 / NRRL B-23932 / Pf-5)).